A 431-amino-acid chain; its full sequence is Glutamate-1-semialdehyde 2,1-aminomutase (431 aa).

Lys-265 is modified (N6-(pyridoxal phosphate)lysine).

It belongs to the class-III pyridoxal-phosphate-dependent aminotransferase family. HemL subfamily. As to quaternary structure, homodimer. Pyridoxal 5'-phosphate serves as cofactor.

The protein localises to the cytoplasm. It catalyses the reaction (S)-4-amino-5-oxopentanoate = 5-aminolevulinate. It functions in the pathway porphyrin-containing compound metabolism; protoporphyrin-IX biosynthesis; 5-aminolevulinate from L-glutamyl-tRNA(Glu): step 2/2. The protein is Glutamate-1-semialdehyde 2,1-aminomutase of Aliivibrio salmonicida (strain LFI1238) (Vibrio salmonicida (strain LFI1238)).